The primary structure comprises 333 residues: D-threonate 4-phosphate dehydrogenase (333 aa).

Residues His140 and Thr141 each coordinate substrate. A divalent metal cation-binding residues include His170, His214, and His270. Positions 278, 287, and 296 each coordinate substrate.

This sequence belongs to the PdxA family. PdxA2 subfamily. As to quaternary structure, homodimer. It depends on a divalent metal cation as a cofactor.

It carries out the reaction 4-O-phospho-D-threonate + NAD(+) = dihydroxyacetone phosphate + CO2 + NADH. In terms of biological role, catalyzes the NAD-dependent oxidation and subsequent decarboxylation of D-threonate 4-phosphate to produce dihydroxyacetone phosphate (DHAP). Can also use 4-hydroxy-L-threonine 4-phosphate as substrate. This is D-threonate 4-phosphate dehydrogenase from Cupriavidus necator (strain ATCC 17699 / DSM 428 / KCTC 22496 / NCIMB 10442 / H16 / Stanier 337) (Ralstonia eutropha).